A 57-amino-acid chain; its full sequence is Conotoxin Cal6.34 (57 aa).

A signal peptide spans 1–22 (MKLTCVLIVAVLILTACQVIAA). 3 cysteine pairs are disulfide-bonded: C26–C37, C29–C43, and C36–C54.

The protein belongs to the conotoxin O1 superfamily. As to expression, expressed by the venom duct.

It is found in the secreted. Functionally, probable neurotoxin. This Californiconus californicus (California cone) protein is Conotoxin Cal6.34.